A 1416-amino-acid chain; its full sequence is Telomere-associated protein RIF1 (1416 aa).

4 disordered regions span residues P789 to Q858, P886 to G984, A1021 to P1054, and T1166 to E1186. The segment covering G928–M945 has biased composition (low complexity). Positions Q1029–I1050 are enriched in polar residues.

It belongs to the RIF1 family. Highly divergent. As to quaternary structure, interacts with Pp1-87b. Interacts with SuUR (via SNF2-like region). Phosphorylated, probably by Cdk1; phosphorylation regulates dissociation from heterochromatin. As to expression, expressed in nurse cells and follicle cells in the adult female (at protein level). Detected in adult at extremely low levels.

It localises to the nucleus. Its subcellular location is the chromosome. The protein localises to the telomere. Regulates the timing of initiation of DNA replication. Functions in copy number control by promoting the underreplication of DNA, which is found in many late replicating euchromatic regions of salivary gland polytene chromosomes. Promotes underreplication by localizing to active DNA replication forks in a partially SuUR-dependent manner, and inhibiting replication fork progression. Might also work as an adapter to recruit Pp1-87B to multiple sites on the chromosome and may function with Pp1-87B to mediate underreplication. Plays an essential role in embryonic development, in the transition from larvae to pupae and, probably, in proliferating tissues later on. In embryos, during mid-blastula transition, binds to and selectively delays the replication of large blocks of repetitive DNA satellite sequences during S phase in response to the activity of Cdk1; maternal Rif1 is specifically required for the normal extension of S phase 14. Unlike mammalian orthologs, does not appear to play a role in DNA damage repair. This chain is Telomere-associated protein RIF1, found in Drosophila melanogaster (Fruit fly).